Consider the following 290-residue polypeptide: MKISPNTISPSQSDPRMSTNVSQRSRVSGIGVPVSHSINNPSIQHVQDFATLSARSLRANVLLNSDDHSVPIHAKNPSELLEAIDNNISQTAQDWGVSIQEVEVILGSSKRIIEPVCGVTANTIMKLFLDNDIFSYSFEKGQSLSLSQLQERLASLPAHKNFILRVNDGGLGHAYVIDFPATTNPSRDAFLYQSDLGEGVTREVRFEDWMTQKASHPISLDDINTHFIGIAQDQIDLAHIAKLFDVDGNVKMLRADHLISHKTSEFNFQLFEYDLKNLENNMSIIKTHCN.

A disordered region spans residues 1 to 26 (MKISPNTISPSQSDPRMSTNVSQRSR). Active-site residues include Cys117, His173, and Gln193.

This sequence belongs to the Cif family.

The protein localises to the secreted. It localises to the host nucleus. The enzyme catalyses L-glutaminyl-[protein] + H2O = L-glutamyl-[protein] + NH4(+). In terms of biological role, protein-glutamine deamidase effector that inhibits the host cell cycle and other key cellular processes such as the actin network and programmed-cell death. Acts by mediating the side chain deamidation of 'Gln-40' of host NEDD8, converting it to glutamate, thereby abolishing the activity of cullin-RING-based E3 ubiquitin-protein ligase complexes (CRL complexes). Inactivation of CRL complexes prevents ubiquitination and subsequent degradation of the cyclin-dependent kinase inhibitors CDKN1A/p21 and CDKN1B/p27, leading to G1 and G2 cell cycle arrests in host cells. Also able to catalyze deamidation of 'Gln-40' of host ubiquitin in vitro; however, NEDD8 constitutes the preferred substrate in vivo. This chain is Protein-glutamine deamidase Cif, found in Yersinia pseudotuberculosis serotype O:3 (strain YPIII).